The chain runs to 364 residues: Fructose-bisphosphate aldolase B (364 aa).

R56 and K147 together coordinate substrate. E188 acts as the Proton acceptor in catalysis. The active-site Schiff-base intermediate with dihydroxyacetone-P is K230.

It belongs to the class I fructose-bisphosphate aldolase family. As to quaternary structure, homotetramer.

It is found in the cytoplasm. The protein resides in the cytoskeleton. The protein localises to the microtubule organizing center. Its subcellular location is the centrosome. It localises to the centriolar satellite. It catalyses the reaction beta-D-fructose 1,6-bisphosphate = D-glyceraldehyde 3-phosphate + dihydroxyacetone phosphate. The protein operates within carbohydrate degradation; glycolysis; D-glyceraldehyde 3-phosphate and glycerone phosphate from D-glucose: step 4/4. This Sparus aurata (Gilthead sea bream) protein is Fructose-bisphosphate aldolase B (aldob).